We begin with the raw amino-acid sequence, 346 residues long: Peripherin-2 (346 aa).

Residues 1–24 (MALLKVKFDQKKRVKLAQGLWLMN) are Cytoplasmic-facing. Residues 25-43 (WLSVLAGIVLFSLGLFLKI) traverse the membrane as a helical segment. Topologically, residues 44 to 61 (ELRKRSDVMDNSESHFVP) are lumenal. Residues 62–80 (NSLIGVGVLSCVFNSLAGK) traverse the membrane as a helical segment. At 81–99 (ICYDALDPAKYAKWKPWLK) the chain is on the cytoplasmic side. Residues 100–123 (LYLAVCVFFNVILFLVALCCFLLR) form a helical membrane-spanning segment. Topologically, residues 124 to 264 (GSLESTLAYG…LNYYSSLMNS (141 aa)) are lumenal. Residue Asn229 is glycosylated (N-linked (GlcNAc...) asparagine). Residues 265 to 290 (MGVVTLLIWLFEVSITAGLRFLHTAL) form a helical membrane-spanning segment. At 291–346 (ESVSNPEDPECESEGWLLENSVSETWKAFLESFKKLGKSNQVEAEAADAGQAPEAG) the chain is on the cytoplasmic side. Residues 341–346 (QAPEAG) form an interaction with MREG region.

The protein belongs to the PRPH2/ROM1 family. In terms of assembly, homodimer; disulfide-linked. Forms a homotetramer. Forms a heterotetramer with ROM1. Homotetramer and heterotetramer core complexes go on to form higher order complexes by formation of intermolecular disulfide bonds. Interacts with MREG. Interacts with STX3. Interacts with SNAP25. In terms of tissue distribution, retina (photoreceptor). In rim region of ROS (rod outer segment) disks.

The protein resides in the membrane. The protein localises to the cell projection. Its subcellular location is the cilium. It is found in the photoreceptor outer segment. It localises to the photoreceptor inner segment. Its function is as follows. Essential for retina photoreceptor outer segment disk morphogenesis, may also play a role with ROM1 in the maintenance of outer segment disk structure. Required for the maintenance of retinal outer nuclear layer thickness. Required for the correct development and organization of the photoreceptor inner segment. In Rattus norvegicus (Rat), this protein is Peripherin-2 (Prph2).